The chain runs to 134 residues: Putative pre-16S rRNA nuclease (134 aa).

It belongs to the YqgF nuclease family.

The protein localises to the cytoplasm. Could be a nuclease involved in processing of the 5'-end of pre-16S rRNA. In Hydrogenovibrio crunogenus (strain DSM 25203 / XCL-2) (Thiomicrospira crunogena), this protein is Putative pre-16S rRNA nuclease.